The chain runs to 236 residues: MQVSVFHTPELVPEGTPDCAVAVDVLRATSTIATALANGATAVQVYADLEALGAAAAGYPREDILRGGERGGKQVEGFDFGNSPLYCTSERVAGKRIFMSTTNGTRTLERIRHAPVVLTAALVNVGFVARYIRSQAFETVWVVGSGWQGNFSLEDTVCAGALVEQLGGAANDEAVAAAALFDTWEGDLIELLERASHGQRLLKLGLLDDIVYCAALDTVSALPRQTAAGVLVQGMA.

Belongs to the ComB family. Mg(2+) serves as cofactor.

The catalysed reaction is (2R)-O-phospho-3-sulfolactate + H2O = (2R)-3-sulfolactate + phosphate. The protein is Probable 2-phosphosulfolactate phosphatase of Gloeobacter violaceus (strain ATCC 29082 / PCC 7421).